The sequence spans 324 residues: GDP-mannose transporter (324 aa).

Over 1-13 the chain is Cytoplasmic; the sequence is MSELKSRIGNSGS. The chain crosses the membrane as a helical span at residues 14–34; sequence IANSGPVSILCYCASSILMTV. The Lumenal portion of the chain corresponds to 35-44; the sequence is TNKFVVNTDG. Residues 45–65 traverse the membrane as a helical segment; sequence FNMFFVMLFAQSLVCTMCLMV. Residues 66-76 are Cytoplasmic-facing; the sequence is LKMFGYAKYRP. A helical membrane pass occupies residues 77–97; that stretch reads LNLIDVKNWLPISFLLVFMIF. The Lumenal segment spans residues 98-116; that stretch reads TSAKALKYMPVPIYTIFKN. N-linked (GlcNAc...) asparagine glycosylation is present at Asn-116. Residues 117-137 traverse the membrane as a helical segment; it reads LTIILIAYGEVLFFGGSVTPM. Position 138 (Glu-138) is a topological domain, cytoplasmic. A helical transmembrane segment spans residues 139-159; that stretch reads LSSFILMVLSSVVASLGDQQA. The Lumenal portion of the chain corresponds to 160-170; the sequence is AKIAQPLANNS. N-linked (GlcNAc...) asparagine glycosylation occurs at Asn-168. Residues 171 to 191 form a helical membrane-spanning segment; it reads ILSPEYYWMFLNCICSASFVL. The Cytoplasmic segment spans residues 192–204; it reads IMRKRIKLTNFKD. Residues 205-225 traverse the membrane as a helical segment; it reads YDTMFYNNALALPILLGFSFL. Residues 226–243 are Lumenal-facing; the sequence is SEDWSSENLAQNFSGESL. Asn-237 carries an N-linked (GlcNAc...) asparagine glycan. A helical membrane pass occupies residues 244–264; the sequence is SAMIISGMTSVGISYCSGWCV. Residues 265–270 lie on the Cytoplasmic side of the membrane; that stretch reads RATSST. The chain crosses the membrane as a helical span at residues 271 to 291; it reads TYSMVGALNKLPIALAGLIFF. The Lumenal segment spans residues 292–295; it reads DAPR. Residues 296-316 traverse the membrane as a helical segment; that stretch reads NFLSIMSIFIGFASGLSYAVA. Over 317–324 the chain is Cytoplasmic; sequence KQKKVQKN.

It belongs to the TPT transporter family. SLC35D subfamily. Homooligomer.

It is found in the golgi apparatus membrane. It localises to the cytoplasmic vesicle membrane. The protein localises to the endoplasmic reticulum membrane. Involved in the import of GDP-mannose from the cytoplasm into the Golgi lumen. In Candida glabrata (strain ATCC 2001 / BCRC 20586 / JCM 3761 / NBRC 0622 / NRRL Y-65 / CBS 138) (Yeast), this protein is GDP-mannose transporter (VRG4).